The primary structure comprises 116 residues: U11-theraphotoxin-Hhn1b (116 aa).

The first 21 residues, 1 to 21, serve as a signal peptide directing secretion; sequence MNTVRVTFLLVFVLAVSLGQA. Positions 22 to 74 are excised as a propeptide; sequence DKDENRMEMQEKTEQGKSYLDFAENLLLQKLEELEAKLLEEDSEESRNSRQKR. Positions 60-69 are enriched in basic and acidic residues; the sequence is LEEDSEESRN. A disordered region spans residues 60–83; sequence LEEDSEESRNSRQKRCIGEGVPCD. Disulfide bonds link Cys-75–Cys-90, Cys-82–Cys-95, and Cys-89–Cys-110.

It belongs to the neurotoxin 14 (magi-1) family. 01 (HNTX-16) subfamily. In terms of tissue distribution, expressed by the venom gland.

Its subcellular location is the secreted. Probable ion channel inhibitor. In Cyriopagopus hainanus (Chinese bird spider), this protein is U11-theraphotoxin-Hhn1b.